Here is a 119-residue protein sequence, read N- to C-terminus: Ribonuclease P protein component (119 aa).

Belongs to the RnpA family. Consists of a catalytic RNA component (M1 or rnpB) and a protein subunit.

It carries out the reaction Endonucleolytic cleavage of RNA, removing 5'-extranucleotides from tRNA precursor.. Its function is as follows. RNaseP catalyzes the removal of the 5'-leader sequence from pre-tRNA to produce the mature 5'-terminus. It can also cleave other RNA substrates such as 4.5S RNA. The protein component plays an auxiliary but essential role in vivo by binding to the 5'-leader sequence and broadening the substrate specificity of the ribozyme. This is Ribonuclease P protein component from Syntrophus aciditrophicus (strain SB).